Reading from the N-terminus, the 357-residue chain is UDP-N-acetylglucosamine--N-acetylmuramyl-(pentapeptide) pyrophosphoryl-undecaprenol N-acetylglucosamine transferase (357 aa).

Residues 10–12 (TGG), asparagine 124, serine 189, isoleucine 244, and glutamine 289 contribute to the UDP-N-acetyl-alpha-D-glucosamine site.

The protein belongs to the glycosyltransferase 28 family. MurG subfamily.

The protein localises to the cell membrane. The catalysed reaction is Mur2Ac(oyl-L-Ala-gamma-D-Glu-L-Lys-D-Ala-D-Ala)-di-trans,octa-cis-undecaprenyl diphosphate + UDP-N-acetyl-alpha-D-glucosamine = beta-D-GlcNAc-(1-&gt;4)-Mur2Ac(oyl-L-Ala-gamma-D-Glu-L-Lys-D-Ala-D-Ala)-di-trans,octa-cis-undecaprenyl diphosphate + UDP + H(+). Its pathway is cell wall biogenesis; peptidoglycan biosynthesis. Its function is as follows. Cell wall formation. Catalyzes the transfer of a GlcNAc subunit on undecaprenyl-pyrophosphoryl-MurNAc-pentapeptide (lipid intermediate I) to form undecaprenyl-pyrophosphoryl-MurNAc-(pentapeptide)GlcNAc (lipid intermediate II). The polypeptide is UDP-N-acetylglucosamine--N-acetylmuramyl-(pentapeptide) pyrophosphoryl-undecaprenol N-acetylglucosamine transferase (Lactococcus lactis subsp. lactis (strain IL1403) (Streptococcus lactis)).